Consider the following 421-residue polypeptide: Glutamate dehydrogenase (421 aa).

The active site involves Lys-105. 220–226 (GYGNAGY) is an NAD(+) binding site.

Belongs to the Glu/Leu/Phe/Val dehydrogenases family. In terms of assembly, homohexamer.

It localises to the cytoplasm. The protein resides in the chromosome. It carries out the reaction L-glutamate + NAD(+) + H2O = 2-oxoglutarate + NH4(+) + NADH + H(+). The enzyme catalyses L-glutamate + NADP(+) + H2O = 2-oxoglutarate + NH4(+) + NADPH + H(+). The sequence is that of Glutamate dehydrogenase (gdhA) from Thermococcus kodakarensis (strain ATCC BAA-918 / JCM 12380 / KOD1) (Pyrococcus kodakaraensis (strain KOD1)).